We begin with the raw amino-acid sequence, 274 residues long: 5-deoxy-glucuronate isomerase (274 aa).

This sequence belongs to the isomerase IolB family.

The catalysed reaction is 5-deoxy-D-glucuronate = 5-dehydro-2-deoxy-D-gluconate. Its pathway is polyol metabolism; myo-inositol degradation into acetyl-CoA; acetyl-CoA from myo-inositol: step 4/7. Involved in the isomerization of 5-deoxy-glucuronate (5DG) to 5-dehydro-2-deoxy-D-gluconate (DKG or 2-deoxy-5-keto-D-gluconate). The chain is 5-deoxy-glucuronate isomerase from Geobacillus thermodenitrificans (strain NG80-2).